The primary structure comprises 195 residues: Imidazoleglycerol-phosphate dehydratase (195 aa).

This sequence belongs to the imidazoleglycerol-phosphate dehydratase family.

The protein resides in the cytoplasm. It carries out the reaction D-erythro-1-(imidazol-4-yl)glycerol 3-phosphate = 3-(imidazol-4-yl)-2-oxopropyl phosphate + H2O. It functions in the pathway amino-acid biosynthesis; L-histidine biosynthesis; L-histidine from 5-phospho-alpha-D-ribose 1-diphosphate: step 6/9. The chain is Imidazoleglycerol-phosphate dehydratase from Geobacter sp. (strain M21).